Here is a 236-residue protein sequence, read N- to C-terminus: MVSALILIQKATPETIVQFHDQLSNELPTLKGKWSFSFKIFRNNPYSIAPELAETSVTSSESKFLYTLAPSYLVGSCISLINKNSACVFSNVIEEESAEISNGSEFSIPDSHLHQGATTGLNDTFDFFVNQKMQSLWTQKQNIKGDGGQIYELENGSLIIRTSNVFLHGIFKGLLIQIEVENESSEHETSSLSEPFERVLSKYNIPRGKMSCNVLDSKLLDKYGDLCLQYSEILNF.

Belongs to the Mediator complex subunit 20 family. Component of the Mediator complex.

The protein localises to the nucleus. Component of the Mediator complex, a coactivator involved in the regulated transcription of nearly all RNA polymerase II-dependent genes. Mediator functions as a bridge to convey information from gene-specific regulatory proteins to the basal RNA polymerase II transcription machinery. Mediator is recruited to promoters by direct interactions with regulatory proteins and serves as a scaffold for the assembly of a functional preinitiation complex with RNA polymerase II and the general transcription factors. The sequence is that of Mediator of RNA polymerase II transcription subunit 20 (SRB2) from Debaryomyces hansenii (strain ATCC 36239 / CBS 767 / BCRC 21394 / JCM 1990 / NBRC 0083 / IGC 2968) (Yeast).